The chain runs to 438 residues: Thymidine phosphorylase (438 aa).

The protein belongs to the thymidine/pyrimidine-nucleoside phosphorylase family. As to quaternary structure, homodimer.

The catalysed reaction is thymidine + phosphate = 2-deoxy-alpha-D-ribose 1-phosphate + thymine. It functions in the pathway pyrimidine metabolism; dTMP biosynthesis via salvage pathway; dTMP from thymine: step 1/2. The enzymes which catalyze the reversible phosphorolysis of pyrimidine nucleosides are involved in the degradation of these compounds and in their utilization as carbon and energy sources, or in the rescue of pyrimidine bases for nucleotide synthesis. In Agrobacterium fabrum (strain C58 / ATCC 33970) (Agrobacterium tumefaciens (strain C58)), this protein is Thymidine phosphorylase.